The following is a 122-amino-acid chain: Protein FAM223B (122 aa).

Belongs to the FAM223 family.

The protein is Protein FAM223B (FAM223B) of Homo sapiens (Human).